The sequence spans 430 residues: uncharacterized protein (430 aa).

Positions 1 to 19 are cleaved as a signal peptide; that stretch reads MKILLFVVLFFNVLVGIYS. N39 is a glycosylation site (N-linked (GlcNAc...) asparagine). Residues 119 to 408 are disordered; it reads LDPNSSPSPS…ELLEKNSDGN (290 aa). The segment covering 124–168 has biased composition (pro residues); it reads SPSPSPSPSPSPSPSPSPSPSPSPSPSPSPSPSPSPSPSPSPSPS. 2 stretches are compositionally biased toward low complexity: residues 169–253 and 263–285; these read PSSS…TPSQ and PTPT…TQTP. Polar residues predominate over residues 286–303; the sequence is ISSRPMSISTEKPSSSEE. An N-linked (GlcNAc...) asparagine glycan is attached at N312. A compositionally biased stretch (basic and acidic residues) spans 316–325; the sequence is SEDKKKDSES. The segment covering 326 to 370 has biased composition (low complexity); that stretch reads KSSQSESPSPSASASESESASESASASTSVSVSASPLPIMDSSSS. The N-linked (GlcNAc...) asparagine glycan is linked to N408.

The protein resides in the secreted. This is an uncharacterized protein from Dictyostelium discoideum (Social amoeba).